A 328-amino-acid chain; its full sequence is Glycerol-3-phosphate dehydrogenase [NAD(P)+] (328 aa).

NADPH-binding residues include W15, H35, Y51, and K107. Sn-glycerol 3-phosphate contacts are provided by K107, G135, and S137. A139 contacts NADPH. Sn-glycerol 3-phosphate contacts are provided by K190, D243, S253, R254, and N255. The active-site Proton acceptor is K190. R254 contributes to the NADPH binding site. Residues L276 and E278 each coordinate NADPH.

The protein belongs to the NAD-dependent glycerol-3-phosphate dehydrogenase family.

The protein resides in the cytoplasm. The enzyme catalyses sn-glycerol 3-phosphate + NAD(+) = dihydroxyacetone phosphate + NADH + H(+). It carries out the reaction sn-glycerol 3-phosphate + NADP(+) = dihydroxyacetone phosphate + NADPH + H(+). It functions in the pathway membrane lipid metabolism; glycerophospholipid metabolism. In terms of biological role, catalyzes the reduction of the glycolytic intermediate dihydroxyacetone phosphate (DHAP) to sn-glycerol 3-phosphate (G3P), the key precursor for phospholipid synthesis. The polypeptide is Glycerol-3-phosphate dehydrogenase [NAD(P)+] (Rhodopseudomonas palustris (strain BisA53)).